A 131-amino-acid polypeptide reads, in one-letter code: Serum amyloid A-3 protein (131 aa).

An N-terminal signal peptide occupies residues 1 to 18 (MNLSTGIIFCFLILGVSS). The segment covering 94 to 105 (MTRDQVREDSKA) has biased composition (basic and acidic residues). The tract at residues 94–131 (MTRDQVREDSKADQFANEWGRSGKDPNHFRPAGLPDKY) is disordered.

The protein belongs to the SAA family. In terms of tissue distribution, expressed in the liver. Expressed in mammary epithelial cells. Expressed at high levels in mammary ductal cells and vesicle engorged alveoli, but absent from stromal and connective tissue and leukocytes. Secreted into colostrum and mastitic milk (at protein level). Low expression levels, if any, in normal milk (at protein level).

The protein resides in the secreted. In terms of biological role, major acute phase reactant. Apolipoprotein of the HDL complex. May have a role in protection of the mammary gland during remodeling and infection. In vitro exhibits antimicrobial activity against Escherichia coli, Streptococcus uberis and Pseudomonas aeruginosa. The polypeptide is Serum amyloid A-3 protein (SAA3) (Bos taurus (Bovine)).